The sequence spans 425 residues: Glutamyl-tRNA reductase (425 aa).

Substrate contacts are provided by residues 49–52, S107, 112–114, and Q118; these read TCNR and EPQ. The Nucleophile role is filled by C50. 187 to 192 serves as a coordination point for NADP(+); the sequence is GAGETI.

This sequence belongs to the glutamyl-tRNA reductase family. In terms of assembly, homodimer.

The catalysed reaction is (S)-4-amino-5-oxopentanoate + tRNA(Glu) + NADP(+) = L-glutamyl-tRNA(Glu) + NADPH + H(+). It participates in porphyrin-containing compound metabolism; protoporphyrin-IX biosynthesis; 5-aminolevulinate from L-glutamyl-tRNA(Glu): step 1/2. In terms of biological role, catalyzes the NADPH-dependent reduction of glutamyl-tRNA(Glu) to glutamate 1-semialdehyde (GSA). The polypeptide is Glutamyl-tRNA reductase (Pseudomonas putida (strain ATCC 47054 / DSM 6125 / CFBP 8728 / NCIMB 11950 / KT2440)).